The primary structure comprises 464 residues: Argininosuccinate lyase (464 aa).

This sequence belongs to the lyase 1 family. Argininosuccinate lyase subfamily.

It is found in the cytoplasm. It carries out the reaction 2-(N(omega)-L-arginino)succinate = fumarate + L-arginine. Its pathway is amino-acid biosynthesis; L-arginine biosynthesis; L-arginine from L-ornithine and carbamoyl phosphate: step 3/3. The protein is Argininosuccinate lyase of Frankia casuarinae (strain DSM 45818 / CECT 9043 / HFP020203 / CcI3).